An 802-amino-acid chain; its full sequence is Fibroblast growth factor receptor 4 (802 aa).

The N-terminal stretch at Met1–Ser21 is a signal peptide. One can recognise an Ig-like C2-type 1 domain in the interval Leu22–Gly118. The Extracellular segment spans residues Leu22–Asp369. Cys57 and Cys101 are disulfide-bonded. An N-linked (GlcNAc...) asparagine glycan is attached at Asn112. A disordered region spans residues Asp119–Tyr148. Ig-like C2-type domains are found at residues Pro152–Asp240 and Pro249–Thr349. Cys172 and Cys224 are joined by a disulfide. N-linked (GlcNAc...) asparagine glycans are attached at residues Asn258, Asn290, Asn311, and Asn322. A disulfide bridge connects residues Cys271 and Cys333. The helical transmembrane segment at Ile370–Tyr390 threads the bilayer. Position 390 is a phosphotyrosine; in variant R-388 (Tyr390). At Arg391–Thr802 the chain is on the cytoplasmic side. Positions Leu467 to Leu755 constitute a Protein kinase domain. ATP contacts are provided by residues Leu473–Val481 and Lys503. A Phosphoserine modification is found at Ser573. Residue Asp612 is the Proton acceptor of the active site. Phosphotyrosine; by autocatalysis is present on residues Tyr642, Tyr643, and Tyr754.

This sequence belongs to the protein kinase superfamily. Tyr protein kinase family. Fibroblast growth factor receptor subfamily. In terms of assembly, monomer. Homodimer after ligand binding. Interacts with FGF1, FGF2, FGF4, FGF6, FGF8, FGF9, FGF16, FGF17, FGF18, FGF19, FGF21 and FGF23 (in vitro). Binding affinity for FGF family members is enhanced by interactions between FGFs and heparan sulfate proteoglycans. Interacts with KLB; this strongly increases the affinity for FGF19 and FGF23. Affinity for FGF19 is strongly increased by KLB and sulfated glycosaminoglycans. KLB and KL both interact with the core-glycosylated FGFR4 in the endoplasmic reticulum and promote its degradation, so that only FGFR4 with fully mature N-glycans is expressed at the cell surface. Identified in a complex with NCAM1, CDH2, PLCG1, FRS2, SRC, SHC1, GAP43 and CTTN. Interacts with MMP14 and HIP1. Interacts with STAT3. N-glycosylated. Full maturation of the glycan chains in the Golgi is essential for high affinity interaction with FGF19. Post-translationally, ubiquitinated. Subject to proteasomal degradation when not fully glycosylated. In terms of processing, autophosphorylated. Binding of FGF family members together with heparan sulfate proteoglycan or heparin promotes receptor dimerization and autophosphorylation on tyrosine residues. Autophosphorylation occurs in trans between the two FGFR molecules present in the dimer. In terms of tissue distribution, expressed in gastrointestinal epithelial cells, pancreas, and gastric and pancreatic cancer cell lines.

The protein resides in the cell membrane. It is found in the endosome. The protein localises to the endoplasmic reticulum. It localises to the secreted. The enzyme catalyses L-tyrosyl-[protein] + ATP = O-phospho-L-tyrosyl-[protein] + ADP + H(+). With respect to regulation, present in an inactive conformation in the absence of bound ligand. Ligand binding leads to dimerization and activation by autophosphorylation on tyrosine residues. Tyrosine-protein kinase that acts as a cell-surface receptor for fibroblast growth factors and plays a role in the regulation of cell proliferation, differentiation and migration, and in regulation of lipid metabolism, bile acid biosynthesis, glucose uptake, vitamin D metabolism and phosphate homeostasis. Required for normal down-regulation of the expression of CYP7A1, the rate-limiting enzyme in bile acid synthesis, in response to FGF19. Phosphorylates PLCG1 and FRS2. Ligand binding leads to the activation of several signaling cascades. Activation of PLCG1 leads to the production of the cellular signaling molecules diacylglycerol and inositol 1,4,5-trisphosphate. Phosphorylation of FRS2 triggers recruitment of GRB2, GAB1, PIK3R1 and SOS1, and mediates activation of RAS, MAPK1/ERK2, MAPK3/ERK1 and the MAP kinase signaling pathway, as well as of the AKT1 signaling pathway. Promotes SRC-dependent phosphorylation of the matrix protease MMP14 and its lysosomal degradation. FGFR4 signaling is down-regulated by receptor internalization and degradation; MMP14 promotes internalization and degradation of FGFR4. Mutations that lead to constitutive kinase activation or impair normal FGFR4 inactivation lead to aberrant signaling. The polypeptide is Fibroblast growth factor receptor 4 (FGFR4) (Homo sapiens (Human)).